Consider the following 341-residue polypeptide: L-threonine 3-dehydrogenase (341 aa).

Residue Cys38 coordinates Zn(2+). Active-site charge relay system residues include Thr40 and His43. Zn(2+)-binding residues include His63, Glu64, Cys93, Cys96, Cys99, and Cys107. NAD(+)-binding positions include Ile175, Asp195, Arg200, 262–264, and 286–287; these read LGI and IY.

Belongs to the zinc-containing alcohol dehydrogenase family. In terms of assembly, homotetramer. Requires Zn(2+) as cofactor.

It localises to the cytoplasm. It catalyses the reaction L-threonine + NAD(+) = (2S)-2-amino-3-oxobutanoate + NADH + H(+). The protein operates within amino-acid degradation; L-threonine degradation via oxydo-reductase pathway; glycine from L-threonine: step 1/2. Its function is as follows. Catalyzes the NAD(+)-dependent oxidation of L-threonine to 2-amino-3-ketobutyrate. This Pseudoalteromonas translucida (strain TAC 125) protein is L-threonine 3-dehydrogenase.